A 396-amino-acid chain; its full sequence is MAATKSHALVHRVLAECPVTKARACELQMPHGQVKTPVFMPVGTQGTMKGVTADQLRNLGCEICLGNTYHLGMRPGPEIMKKASGLHGFMNWDRNLLTDSGGFQMVSLVELSKVTEEGVQFRSPYDGKEILLTPEKSIEIQNALGSDIMMQLDDVVSSTISGPRVEEAMHRSIRWLDRCIAANGNPDRQNLFAIIQGGLDAELRKQCLQEMTKRDVPGFAIGGLSGGEEKDHFWRMVTLSTDHLPRDKPRYLMGVGYATDLVVCVALGCDMFDCVFPTRTARFGSALVPWGSLQLKSKQFAKDFQPIDKNCDCPTCQRYSRSYINALFKSDTAAMHHITIHNIAYQLNLMRSVRESILQGRFPQFVQDFMKTMYGNKDKYPQWAVAALETVGITLQ.

Residue Asp-99 is the Proton acceptor of the active site. Residues 99-103 (DSGGF), Asp-153, Gln-196, and Gly-223 contribute to the queuine site. Residues 254-260 (GVGYATD) form an RNA binding region. The Nucleophile role is filled by Asp-273. An RNA binding; important for wobble base 34 recognition region spans residues 278–282 (TRTAR). Residues Cys-311, Cys-313, Cys-316, and His-341 each coordinate Zn(2+).

This sequence belongs to the queuine tRNA-ribosyltransferase family. In terms of assembly, heterodimer of a catalytic subunit qtrt1 and an accessory subunit qtrt2. Requires Zn(2+) as cofactor.

It is found in the cytoplasm. Its subcellular location is the mitochondrion outer membrane. The enzyme catalyses guanosine(34) in tRNA + queuine = queuosine(34) in tRNA + guanine. Its function is as follows. Catalytic subunit of the queuine tRNA-ribosyltransferase (TGT) that catalyzes the base-exchange of a guanine (G) residue with queuine (Q) at position 34 (anticodon wobble position) in tRNAs with GU(N) anticodons (tRNA-Asp, -Asn, -His and -Tyr), resulting in the hypermodified nucleoside queuosine (7-(((4,5-cis-dihydroxy-2-cyclopenten-1-yl)amino)methyl)-7-deazaguanosine). Catalysis occurs through a double-displacement mechanism. The nucleophile active site attacks the C1' of nucleotide 34 to detach the guanine base from the RNA, forming a covalent enzyme-RNA intermediate. The proton acceptor active site deprotonates the incoming queuine, allowing a nucleophilic attack on the C1' of the ribose to form the product. The chain is Queuine tRNA-ribosyltransferase catalytic subunit 1 from Xenopus laevis (African clawed frog).